The sequence spans 295 residues: Indole-3-glycerol phosphate synthase (295 aa).

The protein belongs to the TrpC family.

The enzyme catalyses 1-(2-carboxyphenylamino)-1-deoxy-D-ribulose 5-phosphate + H(+) = (1S,2R)-1-C-(indol-3-yl)glycerol 3-phosphate + CO2 + H2O. It participates in amino-acid biosynthesis; L-tryptophan biosynthesis; L-tryptophan from chorismate: step 4/5. In Prochlorococcus marinus (strain AS9601), this protein is Indole-3-glycerol phosphate synthase.